We begin with the raw amino-acid sequence, 178 residues long: Oligoribonuclease (178 aa).

In terms of domain architecture, Exonuclease spans 7-168 (LIWIDLEMTG…DDIRESIAEL (162 aa)). Residue tyrosine 128 is part of the active site.

This sequence belongs to the oligoribonuclease family.

The protein localises to the cytoplasm. 3'-to-5' exoribonuclease specific for small oligoribonucleotides. The chain is Oligoribonuclease from Pseudomonas syringae pv. tomato (strain ATCC BAA-871 / DC3000).